The following is a 238-amino-acid chain: Ribonuclease PH (238 aa).

Phosphate is bound by residues Arg86 and 124–126 (GTR).

Belongs to the RNase PH family. As to quaternary structure, homohexameric ring arranged as a trimer of dimers.

The catalysed reaction is tRNA(n+1) + phosphate = tRNA(n) + a ribonucleoside 5'-diphosphate. Functionally, phosphorolytic 3'-5' exoribonuclease that plays an important role in tRNA 3'-end maturation. Removes nucleotide residues following the 3'-CCA terminus of tRNAs; can also add nucleotides to the ends of RNA molecules by using nucleoside diphosphates as substrates, but this may not be physiologically important. Probably plays a role in initiation of 16S rRNA degradation (leading to ribosome degradation) during starvation. The polypeptide is Ribonuclease PH (Rhizobium rhizogenes (strain K84 / ATCC BAA-868) (Agrobacterium radiobacter)).